Consider the following 237-residue polypeptide: MKLIVNADDFGLSRGVNYGIVDAHELGIVTSTTMLTNMPATNHAFQLMEKYPKLKVGVHLTLSCGAPITTDCPTLINPQGEFRLTSQYLLLKEHGLSEEEVEAEWEAQIQQFYKRGVTPSHLDSHHHIHTWEPIIPVIKRLAQKYDLPVRTGFRNPPNGVRLWSDVIDAGFYGEGVKEKYFIELYEKFKAYDGTIEIMCHPAYIDEVLRQHSSYVEGRLKEFEMLTRIKLAEDVTLI.

Mg(2+) is bound by residues His-59 and His-125.

The protein belongs to the YdjC deacetylase family. The cofactor is Mg(2+).

Its function is as follows. Probably catalyzes the deacetylation of acetylated carbohydrates an important step in the degradation of oligosaccharides. The sequence is that of Carbohydrate deacetylase from Halalkalibacterium halodurans (strain ATCC BAA-125 / DSM 18197 / FERM 7344 / JCM 9153 / C-125) (Bacillus halodurans).